A 205-amino-acid chain; its full sequence is Lymphotoxin-alpha (205 aa).

An N-terminal signal peptide occupies residues 1 to 34; that stretch reads MTPPERLFLPRVCGTTLHLLLLGLLLVLLPGAQG. An O-linked (GalNAc...) threonine; partial glycan is attached at threonine 41. The 143-residue stretch at 63–205 folds into the THD domain; that stretch reads PAAHLIGDPS…STVFFGAFAL (143 aa). A glycan (N-linked (GlcNAc...) asparagine) is linked at asparagine 96.

It belongs to the tumor necrosis factor family. As to quaternary structure, homotrimer, and heterotrimer of either two LTB and one LTA subunits or (less prevalent) two LTA and one LTB subunits. Interacts with TNFRSF14.

The protein resides in the secreted. Its subcellular location is the membrane. In terms of biological role, cytokine that in its homotrimeric form binds to TNFRSF1A/TNFR1, TNFRSF1B/TNFBR and TNFRSF14/HVEM. In its heterotrimeric form with LTB binds to TNFRSF3/LTBR. Lymphotoxin is produced by lymphocytes and is cytotoxic for a wide range of tumor cells in vitro and in vivo. The chain is Lymphotoxin-alpha (LTA) from Homo sapiens (Human).